The sequence spans 368 residues: 3-dehydroquinate synthase (368 aa).

NAD(+) contacts are provided by residues 80–85, 114–118, 138–139, K151, and K160; these read DAESAK, GAATD, and TT. Zn(2+) is bound by residues E193, H255, and H271.

It belongs to the sugar phosphate cyclases superfamily. Dehydroquinate synthase family. Requires Co(2+) as cofactor. The cofactor is Zn(2+). NAD(+) is required as a cofactor.

Its subcellular location is the cytoplasm. It carries out the reaction 7-phospho-2-dehydro-3-deoxy-D-arabino-heptonate = 3-dehydroquinate + phosphate. Its pathway is metabolic intermediate biosynthesis; chorismate biosynthesis; chorismate from D-erythrose 4-phosphate and phosphoenolpyruvate: step 2/7. In terms of biological role, catalyzes the conversion of 3-deoxy-D-arabino-heptulosonate 7-phosphate (DAHP) to dehydroquinate (DHQ). The sequence is that of 3-dehydroquinate synthase from Corynebacterium jeikeium (strain K411).